The following is a 491-amino-acid chain: Cytochrome P450 2H2 (491 aa).

Position 436 (C436) interacts with heme.

This sequence belongs to the cytochrome P450 family. Requires heme as cofactor.

The protein resides in the endoplasmic reticulum membrane. It is found in the microsome membrane. The catalysed reaction is an organic molecule + reduced [NADPH--hemoprotein reductase] + O2 = an alcohol + oxidized [NADPH--hemoprotein reductase] + H2O + H(+). Its function is as follows. Cytochromes P450 are a group of heme-thiolate monooxygenases. In liver microsomes, this enzyme is involved in an NADPH-dependent electron transport pathway. It oxidizes a variety of structurally unrelated compounds, including steroids, fatty acids, and xenobiotics. This is Cytochrome P450 2H2 (CYP2H2) from Gallus gallus (Chicken).